We begin with the raw amino-acid sequence, 560 residues long: Radial spoke head protein 3 homolog (560 aa).

Disordered regions lie at residues 134–186 (RKRG…EEPM) and 225–249 (ARKRALARKQAQEQLRPQTPEPVEG). The span at 153–162 (RAPSTYTYTS) shows a compositional bias: polar residues. The stretch at 215–239 (DSLELQRQREARKRALARKQAQEQL) forms a coiled coil. T286 is modified (phosphothreonine; by MAPK1). A coiled-coil region spans residues 331–385 (LEVMEEEELANLRASQREYEELRNSERAEVQRLEEQERRHREEKERRKKQQWEIM). Disordered stretches follow at residues 354-375 (NSERAEVQRLEEQERRHREEKE), 473-498 (HGEDTHQSPEPEDEPGGPGAMTESLE), and 526-560 (DRRSSQERKFMEERELLGQDEETAMRKSLGEEELS).

The protein belongs to the flagellar radial spoke RSP3 family. Component of the axonemal radial spoke 1 (RS1) and 2 (RS2) complexes, at least composed of spoke head proteins RSPH1, RSPH3, RSPH9 and the cilia-specific component RSPH4A or sperm-specific component RSPH6A, spoke stalk proteins RSPH14, DNAJB13, DYDC1, ROPN1L and NME5, and the RS1 complex-specific anchor protein IQUB. Interacts with IQUB. Interacts with phosphorylated MAPK1. Interacts with MEK1. Interacts with PKA regulatory subunits PRKAR1A and PRKAR1B. Interacts with RSPH1. Interacts with RSPH4A. Interacts with RSPH6A. Interacts with RSPH9. Interacts with LRRC23.

It is found in the cytoplasm. Its subcellular location is the cytoskeleton. It localises to the cilium axoneme. The protein resides in the flagellum axoneme. Its function is as follows. Functions as part of axonemal radial spoke complexes that play an important part in the motility of sperm and cilia. Functions as a protein kinase A-anchoring protein that scaffolds the cAMP-dependent protein kinase holoenzyme. May serve as a point of convergence for MAPK and PKA signaling in cilia. The polypeptide is Radial spoke head protein 3 homolog (RSPH3) (Homo sapiens (Human)).